The primary structure comprises 194 residues: uncharacterized protein (194 aa).

Belongs to the mimivirus L114/R131 family.

This is an uncharacterized protein from Acanthamoeba polyphaga mimivirus (APMV).